The following is a 586-amino-acid chain: MPRVDPNLRNRARRPRARRGGGGGVGSNSSRHSGKCRRQRRALSAPPLTFLATTTTTTMMGVASTDDDSLLLKTPDELDKYSGSPQTILTLTDKHDIRQPRVHRGTYHLIQLHLDLRPEELRDPFQILLSTPLQLGEANDESQTAPATLQEEETAASHEPEKKKEKQEKKEEDEDDRNDDRERGILCVVSNEDSDVRPAFSLFPARPGCHILRSVIDQQLTRMAIVRLSLNLFALRIITPLLKRLPLRRKAAHHTALHDCLALHLPELTFEPTLDINNVTENAASVADTAESTDADLTPTLTVRVRHALCWHRVEGGISGPRGLTSRISARLSETTAKTLGPSVFGRLELDPNESPPDLTLSSLTLYQDGILRFNVTCDRTEAPADPVAFRLRLRRETVRRPFFSDAPLPYFVPPRSGAADEGLEVRVPYELTLKNSHTLRIYRRFYGPYLGVFVPHNRQGLKMPVTVWLPRSWLELTVLVSDENGATFPRDALLGRLYFISSKHTLNRGCLSAMTHQVKSTLHSRSTSHSPSQQQLSVLGASIALEDLLPMRLASPETEPQDCKLTENTTEKTSPVTLAMVCGDL.

2 disordered regions span residues 1-47 (MPRV…SAPP) and 136-183 (GEAN…DRER). Composition is skewed to basic residues over residues 10-19 (NRARRPRARR) and 32-41 (HSGKCRRQRR). A compositionally biased stretch (basic and acidic residues) spans 155 to 170 (AASHEPEKKKEKQEKK). A Nuclear localization signal motif is present at residues 161–170 (EKKKEKQEKK). Residues 228 to 237 (LSLNLFALRI) carry the Nuclear export signal 1 (NES 1) motif. Residues 359–366 (LTLSSLTL) carry the Nuclear export signal 2 (NES 2) motif.

Belongs to the HHV-5 UL84 protein family. In terms of assembly, interacts with the DNA polymerase accessory subunit UL44. Interacts with HCMV major transcription-activating enzyme IE2. Interacts with host HNRNPK.

The protein localises to the host nucleus. Its subcellular location is the host cytoplasm. Plays an essential role in viral DNA replication. May participate in the DNA replication initiation by interacting with the origin of lytic replication, oriLyt and subsequently recruiting other viral/cellular factors. Additionally, interacts with and shuttles IRS1 viral mRNA from the host nucleus to the cytoplasm. This is Protein UL84 (UL84) from Human cytomegalovirus (strain AD169) (HHV-5).